The chain runs to 545 residues: E3 ubiquitin-protein ligase ipaH9.8 (545 aa).

The interaction with target proteins stretch occupies residues 1–242; sequence MLPINNNFSL…YHGPRIYFSM (242 aa). LRR repeat units follow at residues 57–77, 78–99, 100–117, 118–139, 140–157, 158–179, 182–203, and 205–228; these read NSDE…NLPA, QITL…PVTL, KKLY…VLPP, ALES…PDSL, LTMN…SLPQ, ALKN…SEGN, VVRE…ILNL, and NECS…QRLT. Positions 243-250 are linker; it reads SDGQQNTL. The segment at 251–545 is E3 ubiquitin-protein ligase catalytic domain; it reads HRPLADAVTA…SENGSQLHHS (295 aa). Residues 253–545 enclose the NEL domain; that stretch reads PLADAVTAWF…SENGSQLHHS (293 aa). Cysteine 337 functions as the Glycyl thioester intermediate in the catalytic mechanism.

This sequence belongs to the LRR-containing bacterial E3 ligase family. Also interacts with human and mouse U2AF1 (U2AF35). In terms of processing, ubiquitinated in the presence of host E1 ubiquitin-activating enzyme, E2 ubiquitin-conjugating enzyme and ubiquitin.

The protein localises to the secreted. Its subcellular location is the host cytoplasm. It is found in the host nucleus. The enzyme catalyses S-ubiquitinyl-[E2 ubiquitin-conjugating enzyme]-L-cysteine + [acceptor protein]-L-lysine = [E2 ubiquitin-conjugating enzyme]-L-cysteine + N(6)-ubiquitinyl-[acceptor protein]-L-lysine.. Exists in an autoinhibited state in the absence of substrate protein, due to interactions of the leucine-rich repeats with NEL domain. Is activated upon binding to a substrate protein. Functionally, effector E3 ubiquitin ligase that interferes with host's ubiquitination pathway and modulates the acute inflammatory responses, thus facilitating bacterial colonization within the host cell. Interacts with IKBKG (NEMO) and TNIP1 (ABIN-1), a ubiquitin-binding adapter protein, which results in TNIP1-dependent 'Lys-27'-linked polyubiquitination of IKBKG. Consequently, polyubiquitinated IKBKG undergoes proteasome-dependent degradation, which perturbs NF-kappa-B activation during bacterial infection. Mediates polyubiquitination of host U2AF1, leading to its proteasomal degradation. Catalyzes 'Lys-48'-linked polyubiquitination and subsequent degradation of a subset of host guanylate-binding proteins (GBP1, GBP2, GBP4 and GBP6), thereby suppressing host cell defense. In contrast, host GBP3 and GBP7 are not ubiquitinated by IpaH9.8. Uses UBE2D2 (UBCH5B) as an E2 ubiquitin-conjugating enzyme. This chain is E3 ubiquitin-protein ligase ipaH9.8 (ipaH9.8), found in Shigella dysenteriae serotype 1 (strain Sd197).